A 155-amino-acid polypeptide reads, in one-letter code: DNA gyrase inhibitor (155 aa).

It belongs to the DNA gyrase inhibitor family. In terms of assembly, interacts with DNA gyrase.

The protein resides in the cytoplasm. In terms of biological role, inhibits the supercoiling activity of DNA gyrase. Acts by inhibiting DNA gyrase at an early step, prior to (or at the step of) binding of DNA by the gyrase. It protects cells against toxins that target DNA gyrase, by inhibiting activity of these toxins and reducing the formation of lethal double-strand breaks in the cell. The protein is DNA gyrase inhibitor of Salmonella arizonae (strain ATCC BAA-731 / CDC346-86 / RSK2980).